A 472-amino-acid polypeptide reads, in one-letter code: Adenosylhomocysteinase (472 aa).

Residues Thr-64, Asp-138, and Glu-198 each contribute to the substrate site. An NAD(+)-binding site is contributed by 199-201; sequence TTT. The substrate site is built by Lys-228 and Asp-232. NAD(+)-binding positions include Asn-233, 262 to 267, Glu-285, Asn-320, 341 to 343, and Asn-386; these read GFGDVG and IGH.

The protein belongs to the adenosylhomocysteinase family. NAD(+) serves as cofactor.

It localises to the cytoplasm. The enzyme catalyses S-adenosyl-L-homocysteine + H2O = L-homocysteine + adenosine. Its pathway is amino-acid biosynthesis; L-homocysteine biosynthesis; L-homocysteine from S-adenosyl-L-homocysteine: step 1/1. In terms of biological role, may play a key role in the regulation of the intracellular concentration of adenosylhomocysteine. This Prochlorococcus marinus (strain MIT 9301) protein is Adenosylhomocysteinase.